We begin with the raw amino-acid sequence, 274 residues long: Orotidine 5'-phosphate decarboxylase (274 aa).

Residues Asp40, 62 to 64 (KTH), 93 to 102 (DRKFIDIGNT), Tyr227, and Arg245 each bind substrate. The active-site Proton donor is the Lys95.

It belongs to the OMP decarboxylase family.

It carries out the reaction orotidine 5'-phosphate + H(+) = UMP + CO2. Its pathway is pyrimidine metabolism; UMP biosynthesis via de novo pathway; UMP from orotate: step 2/2. This chain is Orotidine 5'-phosphate decarboxylase (pyrG), found in Emericella nidulans (strain FGSC A4 / ATCC 38163 / CBS 112.46 / NRRL 194 / M139) (Aspergillus nidulans).